We begin with the raw amino-acid sequence, 814 residues long: Testis-specific zinc finger protein topi (814 aa).

10 consecutive C2H2-type zinc fingers follow at residues 228–250, 275–297, 360–382, 429–453, 467–490, 511–533, 539–564, 570–592, 598–620, and 626–649; these read NECT…MEKH, VKCN…GLIH, LQCE…SASH, FVCN…TSFH, LPCD…EEKH, YLCD…LRFH, FVCQ…RKCH, YLCL…RLIH, YECE…QRIH, and YSCL…RARH. The segment at 669–705 is disordered; it reads TAAAQKAQSHNPEQQDNDVAGGASTSDVPSGSGFMST. Polar residues predominate over residues 691-705; that stretch reads ASTSDVPSGSGFMST.

In terms of assembly, interacts with comr. Expressed in testis; primary spermatocytes.

It is found in the nucleus. Its function is as follows. Required for male meiotic division and spermatid differentiation. Required for accumulation of aly and comr on chromatin. May function as a transcription factor. The polypeptide is Testis-specific zinc finger protein topi (topi) (Drosophila melanogaster (Fruit fly)).